Consider the following 37-residue polypeptide: Large ribosomal subunit protein bL36 (37 aa).

It belongs to the bacterial ribosomal protein bL36 family.

The sequence is that of Large ribosomal subunit protein bL36 from Colwellia psychrerythraea (strain 34H / ATCC BAA-681) (Vibrio psychroerythus).